Reading from the N-terminus, the 458-residue chain is Gamma aminobutyrate transaminase 2 (458 aa).

114 to 115 is a pyridoxal 5'-phosphate binding site; sequence GS. Tyr-147 lines the substrate pocket. Residue Asp-254 participates in pyridoxal 5'-phosphate binding. Residue Lys-283 participates in substrate binding. Lys-283 is modified (N6-(pyridoxal phosphate)lysine).

It belongs to the class-III pyridoxal-phosphate-dependent aminotransferase family. Expressed in leaves, roots, stems, flowers and fruits. Expressed in carpels, but not in stamens.

The protein resides in the cytoplasm. It carries out the reaction 4-aminobutanoate + pyruvate = succinate semialdehyde + L-alanine. The catalysed reaction is 4-aminobutanoate + glyoxylate = succinate semialdehyde + glycine. In terms of biological role, transaminase that degrades gamma-amino butyric acid (GABA) and uses pyruvate or glyoxylate as amino-group acceptor. Cannot use beta-alanine, ornithine, acetylornithine, serine, glycine, asparagine, glutamine, glutamate, valine, leucine, isoleucine, methionine, phenylalanine, histidine, lysine, arginine, aspartate, threonine, tyrosine, tryptophan, proline, or cysteine as amino donors. May be responsible for establishing the GABA gradient in the carpel. The polypeptide is Gamma aminobutyrate transaminase 2 (GABA-TP2) (Solanum lycopersicum (Tomato)).